Here is a 62-residue protein sequence, read N- to C-terminus: Large ribosomal subunit protein uL30 (62 aa).

The protein belongs to the universal ribosomal protein uL30 family. As to quaternary structure, part of the 50S ribosomal subunit.

The sequence is that of Large ribosomal subunit protein uL30 from Prosthecochloris aestuarii (strain DSM 271 / SK 413).